We begin with the raw amino-acid sequence, 254 residues long: 3-deoxy-manno-octulosonate cytidylyltransferase (254 aa).

This sequence belongs to the KdsB family.

The protein localises to the cytoplasm. The enzyme catalyses 3-deoxy-alpha-D-manno-oct-2-ulosonate + CTP = CMP-3-deoxy-beta-D-manno-octulosonate + diphosphate. Its pathway is nucleotide-sugar biosynthesis; CMP-3-deoxy-D-manno-octulosonate biosynthesis; CMP-3-deoxy-D-manno-octulosonate from 3-deoxy-D-manno-octulosonate and CTP: step 1/1. It functions in the pathway bacterial outer membrane biogenesis; lipopolysaccharide biosynthesis. Functionally, activates KDO (a required 8-carbon sugar) for incorporation into bacterial lipopolysaccharide in Gram-negative bacteria. This is 3-deoxy-manno-octulosonate cytidylyltransferase from Porphyromonas gingivalis (strain ATCC BAA-308 / W83).